A 205-amino-acid chain; its full sequence is High frequency lysogenization protein HflD homolog (205 aa).

The protein belongs to the HflD family.

The protein resides in the cytoplasm. The protein localises to the cell inner membrane. This chain is High frequency lysogenization protein HflD homolog, found in Vibrio vulnificus (strain CMCP6).